Reading from the N-terminus, the 66-residue chain is Ocellatin-PT2 (66 aa).

The first 22 residues, 1-22, serve as a signal peptide directing secretion; sequence MAFLKKSLFLVLFLGLVSLSIC. Positions 23–39 are excised as a propeptide; it reads DEEKRQDEDDDDDDDEE. V66 carries the valine amide modification.

In terms of tissue distribution, expressed by the skin glands.

The protein localises to the secreted. Has no antibacterial activity against Gram-negative bacteria E.coli ATCC 25922, S.pneumoniae ATCC 700603 and S.choleraesuis ATCC 14028 or against Gram-positive bacterium S.aureus ATCC 29313. Shows no hemolytic activity and no cytotoxicity. The protein is Ocellatin-PT2 of Leptodactylus pustulatus (Ceara white-lipped frog).